The sequence spans 300 residues: Folate-binding protein 1 (300 aa).

The signal sequence occupies residues methionine 1–glycine 28. Disulfide bonds link cysteine 38-cysteine 76, cysteine 68-cysteine 111, cysteine 77-cysteine 114, cysteine 102-cysteine 139, and cysteine 132-cysteine 178. Residue asparagine 173 is glycosylated (N-linked (GlcNAc...) asparagine). A helical membrane pass occupies residues methionine 238–isoleucine 258.

This sequence belongs to the folate receptor family. Expressed in leaves.

It is found in the membrane. In terms of biological role, folic acid-binding protein involved in salicylic acid- (SA-) induced folate accumulation by triggering uptake and accumulation of folic acid in cells. May be implicated in the transport of the folates from the site of production (leaves) to the site of storage (fruits and seeds) and utilization (roots). This chain is Folate-binding protein 1, found in Arabidopsis thaliana (Mouse-ear cress).